Here is a 172-residue protein sequence, read N- to C-terminus: MNTDAIESMVRDVLSRMNSLQGESATPVAASSSAHTAKVTDYPLANKHPEWVKTATNKTLDDFTLENVLSNKVTAQDMRITPETLRLQAEIAKDAGRDRLAMNFERAAELTAVPDDRILEIYNALRPYRSTKDELMAIADDLENRYQAKICAAFVREAAALYVERKKLKGDD.

Belongs to the diol/glycerol dehydratase small subunit family. In terms of assembly, the propanediol dehydratase enzyme is a heterotrimeric complex composed of a large (PduC), a medium (PduD) and a small (PduE) subunit. Adenosylcob(III)alamin is required as a cofactor.

The protein resides in the bacterial microcompartment. The enzyme catalyses propane-1,2-diol = propanal + H2O. It participates in polyol metabolism; 1,2-propanediol degradation. Its function is as follows. Part of the PduCDE complex that catalyzes the dehydration of 1,2-propanediol (1,2-PD) to propionaldehyde. Localized in the bacterial microcompartment (BMC) dedicated to 1,2-PD degradation. Expression of a cosmid containing the full 21-gene pdu operon in E.coli allows E.coli to grow on 1,2-propanediol (1,2-PD) with the appearance of BMCs in its cytoplasm. In terms of biological role, the 1,2-PD-specific bacterial microcompartment (BMC) concentrates low levels of 1,2-PD catabolic enzymes, concentrates volatile reaction intermediates thus enhancing pathway flux and keeps the level of toxic, mutagenic propionaldehyde low. The sequence is that of Propanediol dehydratase small subunit from Citrobacter freundii.